The following is a 3301-amino-acid chain: Cadherin EGF LAG seven-pass G-type receptor 3 (3301 aa).

Positions 1–31 are cleaved as a signal peptide; sequence MARRPLWWGLPGPSTPVLLLLLLSLFPFSRE. The Extracellular segment spans residues 32-2531; sequence ELGGGGDQDW…RLEGDLELLA (2500 aa). Disordered regions lie at residues 148-189 and 202-314; these read LPLD…ARRS and KLWE…NRHP. Basic residues predominate over residues 267–276; sequence MRSRGLFRRR. Cadherin domains are found at residues 317-424, 425-536, 537-642, 643-747, 748-849, 850-952, 953-1058, 1059-1160, and 1161-1257; these read PQYN…APVF, EQAQ…APQF, SEKR…APIF, VSTP…RPEF, TMKE…RPVF, QSAH…APQF, VASH…APVF, PAEE…SPVL, and NNFQ…VVII. N-linked (GlcNAc...) asparagine glycosylation occurs at N623. N838 carries an N-linked (GlcNAc...) asparagine glycan. N1173, N1213, N1308, and N1318 each carry an N-linked (GlcNAc...) asparagine glycan. Residues 1366-1424 form the EGF-like 1; calcium-binding domain; the sequence is DDNVCLREPCENYMKCVSVLRFDSSAPFLASTSTLFRPIQPIAGLRCRCPPGFTGDFCE. Disulfide bonds link C1370–C1381, C1375–C1412, C1414–C1423, C1430–C1441, C1435–C1450, C1452–C1459, C1468–C1479, C1473–C1489, and C1491–C1502. The 35-residue stretch at 1426-1460 folds into the EGF-like 2; calcium-binding domain; the sequence is ELDLCYSNPCRNGGACARREGGYTCVCRPRFTDCE. The region spanning 1464–1503 is the EGF-like 3; calcium-binding domain; that stretch reads EAGRCVPGVCRNGGTCTNAPNGGFRCQCPAGGAFEGPRCE. A Laminin G-like 1 domain is found at 1504 to 1708; the sequence is VAARSFPPSS…VANNGTMAGC (205 aa). 2 N-linked (GlcNAc...) asparagine glycosylation sites follow: N1638 and N1702. Cystine bridges form between C1682/C1708, C1715/C1726, C1720/C1735, and C1737/C1746. Positions 1711–1747 constitute an EGF-like 4; calcium-binding domain; that stretch reads KSHFCASGPCKNNGFCSERWGGFSCDCPVGFGGKDCR. In terms of domain architecture, Laminin G-like 2 spans 1751-1933; the sequence is AHPYHFQGNG…SHRVNVEPGC (183 aa). N1759 is a glycosylation site (N-linked (GlcNAc...) asparagine). Intrachain disulfides connect C1904/C1933, C1939/C1950, C1944/C1959, C1961/C1970, C1974/C1985, C1979/C1997, C1999/C2008, C2016/C2029, and C2031/C2041. Residues 1935-1971 enclose the EGF-like 5; calcium-binding domain; it reads VTNPCASGPCPPHADCKDLWQTFSCTCRPGYYGPGCV. Position 1952 is a (3R)-3-hydroxyaspartate (D1952). An EGF-like 6; calcium-binding domain is found at 1972–2002; that stretch reads DACLLNPCQNQGSCRHLQGAPHGYTCDCVSG. The EGF-like 7; calcium-binding domain maps to 2003–2042; it reads YFGQHCEHRVDQQCPRGWWGSPTCGPCNCDVHKGFDPNCN. An N-linked (GlcNAc...) asparagine glycan is attached at N2042. An EGF-like 8; calcium-binding domain is found at 2044–2079; the sequence is TNGQCHCKEFHYRPRGSDSCLPCDCYPVGSTSRSCA. Cystine bridges form between C2048/C2063, C2050/C2066, C2068/C2078, C2087/C2096, and C2099/C2111. In terms of domain architecture, Laminin EGF-like spans 2066–2113; it reads CDCYPVGSTSRSCAPHSGQCPCRPGALGRQCNSCDSPFAEVTASGCRV. Y2115 bears the Phosphotyrosine mark. N-linked (GlcNAc...) asparagine glycans are attached at residues N2166, N2185, N2375, N2465, and N2497. The disordered stretch occupies residues 2353 to 2388; it reads LLPSQASQPSPSEVLPTSSNAENATASSVVSPPAPL. The segment covering 2355–2383 has biased composition (low complexity); that stretch reads PSQASQPSPSEVLPTSSNAENATASSVVS. The 165-residue stretch at 2357 to 2521 folds into the GAIN-B domain; it reads QASQPSPSEV…GVLMDASPRE (165 aa). 2 disulfides stabilise this stretch: C2471/C2503 and C2491/C2505. The GPS stretch occupies residues 2471–2521; it reads CVQWDPPGPTDQHGMWTARDCELVHRNGSHARCRCSRTGTFGVLMDASPRE. A helical transmembrane segment spans residues 2532–2552; it reads VFTHVVVAVSVTALVLTAAVL. The Cytoplasmic portion of the chain corresponds to 2553–2563; the sequence is LSLRSLKSNVR. Residues 2564 to 2584 traverse the membrane as a helical segment; that stretch reads GIHANVAAALGVAELLFLLGI. The Extracellular segment spans residues 2585 to 2592; that stretch reads HRTHNQLL. A helical membrane pass occupies residues 2593 to 2613; it reads CTAVAILLHYFFLSTFAWLLV. Over 2614–2634 the chain is Cytoplasmic; sequence QGLHLYRMQVEPRNVDRGAMR. A helical transmembrane segment spans residues 2635 to 2655; the sequence is FYHALGWGVPAVLLGLAVGLD. The Extracellular portion of the chain corresponds to 2656–2673; the sequence is PEGYGNPDFCWISIHEPL. A helical membrane pass occupies residues 2674–2694; it reads IWSFAGPIVLVIVMNGTMFLL. Topologically, residues 2695–2716 are cytoplasmic; it reads AARTSCSTGQREAKKTSVLTLR. The helical transmembrane segment at 2717-2737 threads the bilayer; sequence SSFLLLLLVSASWLFGLLAVN. The Extracellular segment spans residues 2738–2744; the sequence is HSILAFH. Residues 2745–2765 form a helical membrane-spanning segment; sequence YLHAGLCGLQGLAVLLLFCVL. The Cytoplasmic segment spans residues 2766–3301; sequence NADARAAWTP…SEVPRSEGHS (536 aa). Disordered regions lie at residues 2823 to 2844, 2879 to 2919, and 2969 to 2992; these read SSARSGRAQDQDSQRGRSYLRD, AGAD…RPLR, and SNKDAANNNQPELALTSGDETSLG. The span at 2881 to 2891 shows a compositional bias: acidic residues; it reads ADSDSDSDLSL. Residues 2910-2919 are compositionally biased toward basic residues; that stretch reads TRGRFQRPLR. Y3042 is modified (phosphotyrosine). Residues 3083 to 3301 form a disordered region; it reads APVLHPLSRP…SEVPRSEGHS (219 aa). The residue at position 3090 (S3090) is a Phosphoserine. The span at 3094–3111 shows a compositional bias: basic and acidic residues; sequence SQERLDTAPARLEARDRG. Low complexity-rich tracts occupy residues 3168 to 3189 and 3239 to 3261; these read SPQRQLSRDPLLPSRPLDSLSR and LSSILASFNSSALSSVQSSSTPS. Residues 3276 to 3289 show a composition bias toward polar residues; it reads TPRSATSHSISELS.

This sequence belongs to the G-protein coupled receptor 2 family. LN-TM7 subfamily. In terms of tissue distribution, expressed in the CNS and in the eye.

The protein localises to the cell membrane. Its function is as follows. Receptor that may have an important role in cell/cell signaling during nervous system formation. The sequence is that of Cadherin EGF LAG seven-pass G-type receptor 3 (Celsr3) from Mus musculus (Mouse).